A 460-amino-acid polypeptide reads, in one-letter code: NADH-ubiquinone oxidoreductase chain 4 (460 aa).

Helical transmembrane passes span 20–42 (AKWL…LSWL), 61–81 (PLST…VLAS), 94–113 (RTYI…AFGA), 117–139 (IMFY…RWGN), 148–168 (TYFL…LLLL), 195–215 (LWWA…GVHL), 225–245 (PIAG…YGMM), 258–278 (LAYP…SICL), 285–304 (SLIA…GILI), 308–330 (WGFT…LFCL), 351–371 (MILP…LALP), 394–414 (LLLT…LFLM), and 436–456 (LLIT…ELMW).

This sequence belongs to the complex I subunit 4 family.

Its subcellular location is the mitochondrion membrane. It catalyses the reaction a ubiquinone + NADH + 5 H(+)(in) = a ubiquinol + NAD(+) + 4 H(+)(out). Functionally, core subunit of the mitochondrial membrane respiratory chain NADH dehydrogenase (Complex I) that is believed to belong to the minimal assembly required for catalysis. Complex I functions in the transfer of electrons from NADH to the respiratory chain. The immediate electron acceptor for the enzyme is believed to be ubiquinone. This is NADH-ubiquinone oxidoreductase chain 4 (MT-ND4) from Salmo salar (Atlantic salmon).